A 629-amino-acid polypeptide reads, in one-letter code: EF-hand calcium-binding domain-containing protein 7 (629 aa).

Residues 1 to 25 (MAISPRSDATFSSQKSTPSESPRTK) are disordered. The segment covering 7 to 21 (SDATFSSQKSTPSES) has biased composition (polar residues). EF-hand domains lie at 102–137 (TSKA…RGEK) and 138–173 (MTRE…TNEQ). A disordered region spans residues 195–229 (NHIEGSPERDPSPVPKPSPKITRKTDPETFLNKGD). Residues Ser-200 and Ser-212 each carry the phosphoserine modification. The 36-residue stretch at 403 to 438 (EFKSTLSDIFEVIDLDGNGLLSLEEYNFFELRTSGE) folds into the EF-hand 3 domain. Ca(2+) is bound by residues Asp-416, Asp-418, Asn-420, and Glu-427.

As to quaternary structure, component of the EvC complex composed of EFCAB7, IQCE, EVC2 and EVC; built from two subcomplexes, EVC2:EVC and EFCAB7:IQCE. Interacts (via EF-hand 1 and 2) with IQCE (via N-terminus); this interaction anchors the EVC-EVC2 complex in a signaling microdomain at the base of cilia and stimulates the Hedgehog (Hh) pathway. Interacts with EVC2 (via N-terminal end). Interacts with EVC.

The protein resides in the cell projection. It is found in the cilium membrane. Its function is as follows. Component of the EvC complex that positively regulates ciliary Hedgehog (Hh) signaling. Required for the localization of the EVC2:EVC subcomplex at the base of primary cilia. This chain is EF-hand calcium-binding domain-containing protein 7 (EFCAB7), found in Homo sapiens (Human).